The sequence spans 351 residues: MALNIASIRDTKWLTLEVCRQFQRGTCSRSDEECKFAHPPKSCQVENGRVIACFDSLKGRCTRENCKYLHPPAHLKTQLEINGRNNLIQQKTAAAMLAQQMQFMIPSTTMQHVQTFPVNQGLGSSAGLSYTPYLTPMSHSMGLVPTDILPSTPVIVPGSPPVSVTAGSSSNQKLLRTDKLEVCREFQRGNCARGETDCRFAHPSDSPMIDTSDNTVTVCMDYIKSRCSREKCKYFHPPAHLQAKVKAAQHQANQTAVAAQAAATAAAMTQSTAKAMKRPLEATVDLAFPHSGLQPLPKRPALEKSNGSSSLFNPSVLHYQQALANAQLQQPAFFPTGSVLCMTPASSLGRS.

4 consecutive C3H1-type zinc fingers follow at residues 13–41, 47–73, 177–205, and 213–239; these read WLTL…HPPK, NGRV…HPPA, TDKL…HPSD, and DNTV…HPPA.

This sequence belongs to the muscleblind family. As to expression, expressed in fast and slow myotomal muscle, heart, liver, skin, brain and testis.

It is found in the nucleus. The protein localises to the cytoplasm. Functionally, involved in pre-mRNA alternative splicing regulation. RNA-binding protein that binds to 5'ACACCC-3' core sequence. The polypeptide is Muscleblind-like protein 2a (mbnl2a) (Takifugu rubripes (Japanese pufferfish)).